The chain runs to 501 residues: Cytochrome P450 3A31 (501 aa).

Residue C440 coordinates heme.

It belongs to the cytochrome P450 family. Requires heme as cofactor. In terms of tissue distribution, expressed constitutively in liver.

It localises to the endoplasmic reticulum membrane. The protein localises to the microsome membrane. The enzyme catalyses an organic molecule + reduced [NADPH--hemoprotein reductase] + O2 = an alcohol + oxidized [NADPH--hemoprotein reductase] + H2O + H(+). Cytochromes P450 are a group of heme-thiolate monooxygenases. In liver microsomes, this enzyme is involved in an NADPH-dependent electron transport pathway. It oxidizes a variety of structurally unrelated compounds, including steroids, fatty acids, and xenobiotics. The chain is Cytochrome P450 3A31 (CYP3A31) from Mesocricetus auratus (Golden hamster).